A 352-amino-acid chain; its full sequence is MATVVMEQIGRLFINAQQLRQIPQLLESAFPTLPCTVKVSDVPWVFRERHILTGYRQPDQSWRYYFLTLFQRHNETLNVWTHLLAAFIILVKWQEISETVDFLRDPHAQPLFIVLLAAFTYLSFSALAHLLSAKSELSYYTFYFLDYVGVAVYQYGSALAHYYYAIEKEWHTKVQGLFLPAAAFLAWLTCFGCCYGKYASPELPKVANKLFQVVPSALAYCLDISPVVHRIYSCYQEGCSDPVVAYHFYHVVFFLIGAYFFCCPHPESLFPGKCDFIGQGHQLFHVFVVVCTLTQVEALRTDFTERRPFYERLHGDLAHDAVALFIFTACCSALTAFYVRQRVRASLHEKGE.

Residues 1-75 (MATVVMEQIG…FLTLFQRHNE (75 aa)) are Cytoplasmic-facing. The chain crosses the membrane as a helical span at residues 76 to 96 (TLNVWTHLLAAFIILVKWQEI). At 97 to 110 (SETVDFLRDPHAQP) the chain is on the extracellular side. A helical membrane pass occupies residues 111–131 (LFIVLLAAFTYLSFSALAHLL). At 132 to 139 (SAKSELSY) the chain is on the cytoplasmic side. Residues 140–160 (YTFYFLDYVGVAVYQYGSALA) form a helical membrane-spanning segment. The Extracellular portion of the chain corresponds to 161–175 (HYYYAIEKEWHTKVQ). The helical transmembrane segment at 176–196 (GLFLPAAAFLAWLTCFGCCYG) threads the bilayer. The Cytoplasmic segment spans residues 197–242 (KYASPELPKVANKLFQVVPSALAYCLDISPVVHRIYSCYQEGCSDP). A helical membrane pass occupies residues 243-263 (VVAYHFYHVVFFLIGAYFFCC). The Extracellular segment spans residues 264–275 (PHPESLFPGKCD). The helical transmembrane segment at 276–296 (FIGQGHQLFHVFVVVCTLTQV) threads the bilayer. Over 297-316 (EALRTDFTERRPFYERLHGD) the chain is Cytoplasmic. A helical transmembrane segment spans residues 317–337 (LAHDAVALFIFTACCSALTAF). Residues 338–352 (YVRQRVRASLHEKGE) lie on the Extracellular side of the membrane.

It belongs to the ADIPOR family. Strongly expressed in ovary and brain; lower expression in testis and pituitary. Not detected in heart, kidney, spleen, intestine, gill and muscle.

It is found in the cell membrane. Its function is as follows. Steroid membrane receptor. Binds progesterone, progestin and 17-hydroxyprogesterone in vitro. Capable of mediating progestin-induced oocyte maturation. The chain is Membrane progestin receptor alpha (mpra) from Cynoscion nebulosus (Spotted seatrout).